We begin with the raw amino-acid sequence, 443 residues long: Elongation factor 1-alpha (443 aa).

Positions Lys-5–Tyr-228 constitute a tr-type G domain. The tract at residues Gly-14–Ser-21 is G1. A GTP-binding site is contributed by Gly-14 to Ser-21. Residues Gly-70–Asp-74 are G2. The interval Asp-91 to Gly-94 is G3. GTP-binding positions include Asp-91 to His-95 and Asn-153 to Asp-156. The G4 stretch occupies residues Asn-153 to Asp-156. The tract at residues Ser-192–Phe-194 is G5.

Belongs to the TRAFAC class translation factor GTPase superfamily. Classic translation factor GTPase family. EF-Tu/EF-1A subfamily.

The protein localises to the cytoplasm. Its function is as follows. This protein promotes the GTP-dependent binding of aminoacyl-tRNA to the A-site of ribosomes during protein biosynthesis. This chain is Elongation factor 1-alpha (MEF-1), found in Plasmodium falciparum (isolate K1 / Thailand).